Consider the following 575-residue polypeptide: Preprotein translocase subunit SCY2, chloroplastic (575 aa).

The transit peptide at 1 to 34 directs the protein to the chloroplast; the sequence is MNSSQACFFHFSLRPISLSHPSYAFLSKRDPFLC. The next 10 helical transmembrane spans lie at 157–177, 206–226, 251–271, 285–305, 306–326, 346–366, 414–434, 447–467, 509–529, and 531–551; these read FVTA…LPGF, LSLF…MQVL, IWWL…YTSL, VMMT…LCDT, ISES…ILTG, LPYL…AVVV, TTYL…PFLL, GAPP…FNIF, FWGG…DHYL, and SINQ…GSII.

This sequence belongs to the SecY/SEC61-alpha family. As to quaternary structure, part of a second Sec protein translocation apparatus. Interacts probably with SECA2. As to expression, ubiquitous.

The protein localises to the plastid. It localises to the chloroplast membrane. The protein resides in the amyloplast membrane. Its subcellular location is the chloroplast thylakoid membrane. Functionally, involved in protein export. Probably interacts with other proteins to allow the postimport or conservative sorting pathway for inner membrane proteins in plastids. Central subunit of the protein translocation channel SecYE. Consists of two halves formed by TMs 1-5 and 6-10. These two domains form a lateral gate at the front which open onto the bilayer between TMs 2 and 7, and are clamped together by SecE at the back. The channel is closed by both a pore ring composed of hydrophobic SecY resides and a short helix (helix 2A) on the extracellular side of the membrane which forms a plug. The protein is Preprotein translocase subunit SCY2, chloroplastic (SCY2) of Arabidopsis thaliana (Mouse-ear cress).